The primary structure comprises 208 residues: Large ribosomal subunit protein bL25 (208 aa).

The protein belongs to the bacterial ribosomal protein bL25 family. CTC subfamily. Part of the 50S ribosomal subunit; part of the 5S rRNA/L5/L18/L25 subcomplex. Contacts the 5S rRNA. Binds to the 5S rRNA independently of L5 and L18.

Functionally, this is one of the proteins that binds to the 5S RNA in the ribosome where it forms part of the central protuberance. The polypeptide is Large ribosomal subunit protein bL25 (Syntrophotalea carbinolica (strain DSM 2380 / NBRC 103641 / GraBd1) (Pelobacter carbinolicus)).